Here is a 223-residue protein sequence, read N- to C-terminus: DNA mismatch repair protein MutH (223 aa).

It belongs to the MutH family.

It localises to the cytoplasm. Sequence-specific endonuclease that cleaves unmethylated GATC sequences. It is involved in DNA mismatch repair. The chain is DNA mismatch repair protein MutH from Haemophilus influenzae (strain PittGG).